The primary structure comprises 867 residues: MLTGNEIREKFIEFFMQKQHKHFESASLIPDDPTLLLTVAGMVPFKPYFLGQKEAPCPRVTTYQKCIRTNDLENVGRTARHHTFFEMLGNFSFGNYFKKEAIKWSWEFVTEVLKINKDKLWVTVFTTDDEAEKIWIEECNFPKERIVRMGESENWWSAGPTGSCGPCSEIHVDLGIQYGGDENSKIGDEGTDNRFIEIWNLVFTEWNRMEDGSLEPLPKKNIDTGAGLERIAAVVQGKTNNFETDLLFPILEEAGKITGSQYGKNPETNFSLKVITDHARAVTFLVNDGVIPSNEGRGYILRRILRRAVRHGRLLGYKDLFMYKMVDKVVEKFEIAYPDLRKNVENIRKIVKIEEEKFSNTLDQGIQLVNQEIDNLLTNGKNKLDGEISFKLYDTYGFPYELTEEIAEERGVIVLREEFEAKMEEQKEKARSAREVVMEKGQDSFIEEFYDKYGVTEFTGYEKTEDEGKLLSLREAKDRKYLLIFDKTPFYAESGGQVGDQGKIYSDNFAGKVLDVQKQKDIFIHTVKLEKGMPEENKTYKLEVDVVKRLDTAKNHTATHLLHKALREIVGTHVQQAGSLVDSEKLRFDFSHYEALTEEQLSKIEDIVNKKIREGIEVVVSHHSIEEAKKLGAMMLFGDKYGDVVRVVDVHGFSTELCGGTHIDNIGKIGLFKITSEGGIAAGVRRIEAKTGYGAYLVEKEEADILKNIEQKLKATNSNLVEKVEKNLETLKDTEKELEILKQKLALFETKAAISGMEEIGGVKVLIAAFKDKSTEDLRTMIDTIKDNNEKAIIVLASTQDKLAFAVGVTKTLTDKIKAGDLVKKLAEITGGKGGGRPDFAQAGGKDEGKLLDAFKEVREIIEAKLV.

4 residues coordinate Zn(2+): His556, His560, Cys658, and His662.

It belongs to the class-II aminoacyl-tRNA synthetase family. Zn(2+) serves as cofactor.

The protein localises to the cytoplasm. It catalyses the reaction tRNA(Ala) + L-alanine + ATP = L-alanyl-tRNA(Ala) + AMP + diphosphate. Its function is as follows. Catalyzes the attachment of alanine to tRNA(Ala) in a two-step reaction: alanine is first activated by ATP to form Ala-AMP and then transferred to the acceptor end of tRNA(Ala). Also edits incorrectly charged Ser-tRNA(Ala) and Gly-tRNA(Ala) via its editing domain. The sequence is that of Alanine--tRNA ligase from Fusobacterium nucleatum subsp. nucleatum (strain ATCC 25586 / DSM 15643 / BCRC 10681 / CIP 101130 / JCM 8532 / KCTC 2640 / LMG 13131 / VPI 4355).